Here is a 405-residue protein sequence, read N- to C-terminus: Amino acid transporter AVT1I (405 aa).

11 consecutive transmembrane segments (helical) span residues 22 to 42 (CFNA…YSLA), 46 to 66 (WLSL…SLLI), 93 to 113 (IIVS…FLIL), 140 to 160 (FMAT…LSVL), 169 to 189 (LATT…GIGF), 201 to 221 (IPTA…LPTL), 234 to 254 (VLLI…VLGY), 278 to 298 (VAIY…ITPT), 318 to 338 (LLIS…LPFF), 343 to 363 (SLVG…LCYL), and 377 to 397 (IMLF…TYIA).

The protein belongs to the amino acid/polyamine transporter 2 family. Amino acid/auxin permease (AAAP) (TC 2.A.18.5) subfamily.

It is found in the membrane. This chain is Amino acid transporter AVT1I, found in Arabidopsis thaliana (Mouse-ear cress).